The primary structure comprises 57 residues: Potassium channel toxin alpha-KTx 23.3 (57 aa).

The signal sequence occupies residues 1–23 (MKMSIVIILLLFTCLIATNGASG). Cystine bridges form between cysteine 26–cysteine 46, cysteine 32–cysteine 51, cysteine 36–cysteine 53, and cysteine 41–cysteine 56.

This sequence belongs to the short scorpion toxin superfamily. Potassium channel inhibitor family. Alpha-KTx 23 subfamily. As to expression, expressed by the venom gland.

It is found in the secreted. Functionally, this toxin shows both immunosuppressive and anti-inflammatory activities. It has the potential to inhibit human T cell activation, since it reduces IL-2 secretion and the expression of T cell activation marker CD69 and acts as an anti-inflammatory agent, since it provokes the reduction of secretion of both IFN-gamma and TNF-alpha. In vivo, the delayed-type hypersensitivity response in rat autoimmune disease model is ameliorated in the presence of this toxin. Acts by blocking Kv1.3/KCNA3 potassium channels of T-lymphocytes. In Scorpiops tibetanus (Scorpion), this protein is Potassium channel toxin alpha-KTx 23.3.